The following is a 1103-amino-acid chain: Kinesin-like protein KIF1C (1103 aa).

The region spanning 5–348 (SVKVAVRVRP…LRYADRTKQI (344 aa)) is the Kinesin motor domain. ATP is bound at residue 97–104 (GQTGAGKS). Ser295 carries the post-translational modification Phosphoserine. Coiled coils occupy residues 359 to 388 (NARLIRELQEEVARLRELLMAQGLSASALE) and 438 to 479 (EEAM…LAEM). Positions 400 to 438 (ALPAVSSPPAPVSPSSPTTHNGELEPSFSPNTESQIGPE) are disordered. Ser494 is subject to Phosphoserine. The FHA domain occupies 523–590 (TRVGQVDMDI…LKSGNRIVMG (68 aa)). Residues 633–674 (EQQGIDIKLEMEKRLQDLENQYRKEKEEADLLLEQQRLYADS) are a coiled coil. Residues Ser674 and Ser676 each carry the phosphoserine modification. 3 disordered regions span residues 808-828 (GEEEGGGAGSGGGSEEGARGA), 874-924 (LAQD…WERV), and 950-1103 (QGLQ…GAAV). Gly residues predominate over residues 813 to 822 (GGAGSGGGSE). Positions 828-872 (AEVEDLRAHIDKLTGILQEVKLQNSSKDRELQALRDRMLRMERVI) form a coiled coil. The segment covering 893–910 (PEGSEAAEEAAPSDRMPS) has biased composition (low complexity). Position 915 is a phosphoserine (Ser915). Over residues 953–962 (QGSGGRGGGL) the composition is skewed to gly residues. A compositionally biased stretch (basic residues) spans 1021–1031 (PSPRRSHHPRR). Ser1033 is modified (phosphoserine). Residue Arg1041 is modified to Omega-N-methylarginine. A compositionally biased stretch (pro residues) spans 1062 to 1083 (PQPPQPYPAQRPPGPRYPPYTT). Position 1083 is a phosphothreonine (Thr1083). Ser1092 carries the post-translational modification Phosphoserine. Residues 1092–1103 (SAPDLKESGAAV) show a composition bias toward basic and acidic residues.

The protein belongs to the TRAFAC class myosin-kinesin ATPase superfamily. Kinesin family. Unc-104 subfamily. As to quaternary structure, monomer. Interacts with BICD2. Post-translationally, phosphorylated on tyrosine residues. As to expression, expressed in all tissues examined, with most abundant expression in heart and skeletal muscle.

It is found in the cytoplasm. The protein localises to the cytoskeleton. Motor required for the retrograde transport of Golgi vesicles to the endoplasmic reticulum. Has a microtubule plus end-directed motility. In Homo sapiens (Human), this protein is Kinesin-like protein KIF1C (KIF1C).